Reading from the N-terminus, the 308-residue chain is Ribosomal RNA large subunit methyltransferase F (308 aa).

Belongs to the methyltransferase superfamily. METTL16/RlmF family.

The protein localises to the cytoplasm. It carries out the reaction adenosine(1618) in 23S rRNA + S-adenosyl-L-methionine = N(6)-methyladenosine(1618) in 23S rRNA + S-adenosyl-L-homocysteine + H(+). Its function is as follows. Specifically methylates the adenine in position 1618 of 23S rRNA. This is Ribosomal RNA large subunit methyltransferase F from Shigella flexneri serotype 5b (strain 8401).